Reading from the N-terminus, the 243-residue chain is Ubiquinone/menaquinone biosynthesis C-methyltransferase UbiE (243 aa).

S-adenosyl-L-methionine is bound by residues T69, D90, and 116–117 (DA).

The protein belongs to the class I-like SAM-binding methyltransferase superfamily. MenG/UbiE family.

The catalysed reaction is a 2-demethylmenaquinol + S-adenosyl-L-methionine = a menaquinol + S-adenosyl-L-homocysteine + H(+). It carries out the reaction a 2-methoxy-6-(all-trans-polyprenyl)benzene-1,4-diol + S-adenosyl-L-methionine = a 5-methoxy-2-methyl-3-(all-trans-polyprenyl)benzene-1,4-diol + S-adenosyl-L-homocysteine + H(+). The protein operates within quinol/quinone metabolism; menaquinone biosynthesis; menaquinol from 1,4-dihydroxy-2-naphthoate: step 2/2. Its pathway is cofactor biosynthesis; ubiquinone biosynthesis. Functionally, methyltransferase required for the conversion of demethylmenaquinol (DMKH2) to menaquinol (MKH2) and the conversion of 2-polyprenyl-6-methoxy-1,4-benzoquinol (DDMQH2) to 2-polyprenyl-3-methyl-6-methoxy-1,4-benzoquinol (DMQH2). This Burkholderia cenocepacia (strain ATCC BAA-245 / DSM 16553 / LMG 16656 / NCTC 13227 / J2315 / CF5610) (Burkholderia cepacia (strain J2315)) protein is Ubiquinone/menaquinone biosynthesis C-methyltransferase UbiE.